We begin with the raw amino-acid sequence, 105 residues long: MSKLHTLVDICMVPLGTSSPSVSDYVTKIEKRIRESHLKSTMHSFGTTIEGPWDEVMSLIGQLHEYSHELGYVRIHTEMRLGTRTDKQQTAQDKVDVVEKKLSDY.

Belongs to the UPF0045 family.

The sequence is that of UPF0045 protein ECM15 (ECM15) from Eremothecium gossypii (strain ATCC 10895 / CBS 109.51 / FGSC 9923 / NRRL Y-1056) (Yeast).